The following is a 1139-amino-acid chain: uncharacterized protein (1139 aa).

This sequence belongs to the IIV-6 295L family.

This is an uncharacterized protein from Aedes vexans (Inland floodwater mosquito).